The primary structure comprises 156 residues: Lipoprotein signal peptidase (156 aa).

3 helical membrane-spanning segments follow: residues 5–25, 64–84, and 89–109; these read FKFIFYFWGAFVLVFALDQWV, YLHLALIVVLFIYLFWQKTLL, and IAFGMMLGAGVSNLLDRFIHG. Catalysis depends on residues aspartate 113 and aspartate 130. Residues 122-142 traverse the membrane as a helical segment; the sequence is NFAIFNVADVMINISVALILI.

This sequence belongs to the peptidase A8 family.

Its subcellular location is the cell inner membrane. It carries out the reaction Release of signal peptides from bacterial membrane prolipoproteins. Hydrolyzes -Xaa-Yaa-Zaa-|-(S,diacylglyceryl)Cys-, in which Xaa is hydrophobic (preferably Leu), and Yaa (Ala or Ser) and Zaa (Gly or Ala) have small, neutral side chains.. Its pathway is protein modification; lipoprotein biosynthesis (signal peptide cleavage). In terms of biological role, this protein specifically catalyzes the removal of signal peptides from prolipoproteins. The chain is Lipoprotein signal peptidase from Campylobacter jejuni subsp. jejuni serotype O:23/36 (strain 81-176).